The following is a 155-amino-acid chain: Interleukin-2 (155 aa).

Positions 1-20 (MYKMQLLSCIALTLVLVANS) are cleaved as a signal peptide. Threonine 24 carries O-linked (GalNAc...) threonine glycosylation. Cysteines 79 and 127 form a disulfide. N-linked (GlcNAc...) asparagine glycosylation occurs at asparagine 112.

Belongs to the IL-2 family.

It localises to the secreted. Cytokine produced by activated CD4-positive helper T-cells and to a lesser extend activated CD8-positive T-cells and natural killer (NK) cells that plays pivotal roles in the immune response and tolerance. Binds to a receptor complex composed of either the high-affinity trimeric IL-2R (IL2RA/CD25, IL2RB/CD122 and IL2RG/CD132) or the low-affinity dimeric IL-2R (IL2RB and IL2RG). Interaction with the receptor leads to oligomerization and conformation changes in the IL-2R subunits resulting in downstream signaling starting with phosphorylation of JAK1 and JAK3. In turn, JAK1 and JAK3 phosphorylate the receptor to form a docking site leading to the phosphorylation of several substrates including STAT5. This process leads to activation of several pathways including STAT, phosphoinositide-3-kinase/PI3K and mitogen-activated protein kinase/MAPK pathways. Functions as a T-cell growth factor and can increase NK-cell cytolytic activity as well. Promotes strong proliferation of activated B-cells and subsequently immunoglobulin production. Plays a pivotal role in regulating the adaptive immune system by controlling the survival and proliferation of regulatory T-cells, which are required for the maintenance of immune tolerance. Moreover, participates in the differentiation and homeostasis of effector T-cell subsets, including Th1, Th2, Th17 as well as memory CD8-positive T-cells. This chain is Interleukin-2 (IL2), found in Canis lupus familiaris (Dog).